The primary structure comprises 348 residues: Putative S-adenosyl-L-methionine-dependent methyltransferase Mb3432 (348 aa).

S-adenosyl-L-methionine is bound by residues Asp-171 and 200–201; that span reads DL.

Belongs to the UPF0677 family.

Exhibits S-adenosyl-L-methionine-dependent methyltransferase activity. The chain is Putative S-adenosyl-L-methionine-dependent methyltransferase Mb3432 from Mycobacterium bovis (strain ATCC BAA-935 / AF2122/97).